A 356-amino-acid polypeptide reads, in one-letter code: Methionine import ATP-binding protein MetN (356 aa).

Positions 7–250 (IKLDNIDVTF…PRESLTQDFI (244 aa)) constitute an ABC transporter domain. Residue 43-50 (GYSGAGKS) participates in ATP binding.

It belongs to the ABC transporter superfamily. Methionine importer (TC 3.A.1.24) family. The complex is composed of two ATP-binding proteins (MetN), two transmembrane proteins (MetI) and a solute-binding protein (MetQ).

It localises to the cell membrane. The enzyme catalyses L-methionine(out) + ATP + H2O = L-methionine(in) + ADP + phosphate + H(+). The catalysed reaction is D-methionine(out) + ATP + H2O = D-methionine(in) + ADP + phosphate + H(+). Part of the ABC transporter complex MetNIQ involved in methionine import. Responsible for energy coupling to the transport system. This chain is Methionine import ATP-binding protein MetN, found in Streptococcus agalactiae serotype Ia (strain ATCC 27591 / A909 / CDC SS700).